The chain runs to 584 residues: ATP-dependent lipid A-core flippase (584 aa).

The next 5 helical transmembrane spans lie at 18–38, 65–85, 155–175, 252–272, and 277–297; these read LWPI…TLIL, VFVW…FSGF, IIGL…ILVL, IFDP…LYAA, and VMEM…IVLM. Positions 30-312 constitute an ABC transmembrane type-1 domain; that stretch reads VVASITLILN…LTNVSAQFQR (283 aa). Residues 344–580 form the ABC transporter domain; sequence IIFDDVTFFY…QGIYAQLYKL (237 aa). 378 to 385 contacts ATP; sequence GRSGSGKS.

It belongs to the ABC transporter superfamily. Lipid exporter (TC 3.A.1.106) family. As to quaternary structure, homodimer.

The protein localises to the cell inner membrane. The enzyme catalyses ATP + H2O + lipid A-core oligosaccharideSide 1 = ADP + phosphate + lipid A-core oligosaccharideSide 2.. In terms of biological role, involved in lipopolysaccharide (LPS) biosynthesis. Translocates lipid A-core from the inner to the outer leaflet of the inner membrane. Transmembrane domains (TMD) form a pore in the inner membrane and the ATP-binding domain (NBD) is responsible for energy generation. This is ATP-dependent lipid A-core flippase from Blochmanniella pennsylvanica (strain BPEN).